A 494-amino-acid polypeptide reads, in one-letter code: Guanosine-5'-triphosphate,3'-diphosphate pyrophosphatase (494 aa).

The protein belongs to the GppA/Ppx family. GppA subfamily.

The enzyme catalyses guanosine 3'-diphosphate 5'-triphosphate + H2O = guanosine 3',5'-bis(diphosphate) + phosphate + H(+). Its pathway is purine metabolism; ppGpp biosynthesis; ppGpp from GTP: step 2/2. Catalyzes the conversion of pppGpp to ppGpp. Guanosine pentaphosphate (pppGpp) is a cytoplasmic signaling molecule which together with ppGpp controls the 'stringent response', an adaptive process that allows bacteria to respond to amino acid starvation, resulting in the coordinated regulation of numerous cellular activities. The protein is Guanosine-5'-triphosphate,3'-diphosphate pyrophosphatase of Escherichia coli O139:H28 (strain E24377A / ETEC).